The primary structure comprises 816 residues: Phosphatidylinositol 4-kinase beta (816 aa).

Disordered regions lie at residues 1 to 29, 99 to 121, and 250 to 318; these read MGDM…GGSL, EEED…RRRQ, and RKRE…SFSS. Residue G2 is modified to N-acetylglycine. The interval 2 to 68 is interaction with ACBD3; sequence GDMVVEPATL…VKLLHGGVAI (67 aa). A compositionally biased stretch (low complexity) spans 10 to 29; the sequence is TLKPTSEPTPSPSGNNGGSL. Positions 61 to 242 constitute a PIK helical domain; the sequence is LLHGGVAISS…GTKLRKLILS (182 aa). At S258 the chain carries Phosphoserine. Residue T263 is modified to Phosphothreonine. Phosphoserine is present on residues S266, S275, S277, S284, and S294. 2 stretches are compositionally biased toward polar residues: residues 278-297 and 306-318; these read DATA…SNPK and SSST…SFSS. The residue at position 428 (S428) is a Phosphoserine. T438 carries the post-translational modification Phosphothreonine. S511 carries the post-translational modification Phosphoserine. Phosphothreonine is present on residues T517 and T519. One can recognise a PI3K/PI4K catalytic domain in the interval 535-801; the sequence is EPWQEKVRRI…MVDGSMRSIT (267 aa). The interval 541 to 547 is G-loop; it reads VRRIREG. Residues 668 to 676 form a catalytic loop region; the sequence is QVKDRHNGN. The segment at 687 to 711 is activation loop; that stretch reads HIDFGFILSSSPRNLGFETSAFKLT.

It belongs to the PI3/PI4-kinase family. Type III PI4K subfamily. As to quaternary structure, interacts with ARF1 and ARF3 in the Golgi complex, but not with ARF4, ARF5 or ARF6. Interacts with NCS1/FREQ in a calcium-independent manner. Interacts with CALN1/CABP8 and CALN2/CABP7; in a calcium-dependent manner; this interaction competes with NCS1/FREQ binding. Interacts with ACBD3. Interacts with ARMH3, YWHAB, YWHAE, YWHAG, YWHAH, YWHAQ, YWHAZ and SFN. Interacts with GGA2 (via VHS domain); the interaction is important for PI4KB location at the Golgi apparatus membrane. Interacts with ATG9A. The cofactor is Mg(2+). Requires Mn(2+) as cofactor. Strongly expressed in brain, kidney, lung, small intestine, uterus and adrenal gland. Weaker expression in liver, heart, skeletal muscle, thymus and testis. Not detected in spleen.

It localises to the golgi apparatus. The protein resides in the endomembrane system. It is found in the mitochondrion outer membrane. The protein localises to the rough endoplasmic reticulum membrane. Its subcellular location is the golgi apparatus membrane. It carries out the reaction a 1,2-diacyl-sn-glycero-3-phospho-(1D-myo-inositol) + ATP = a 1,2-diacyl-sn-glycero-3-phospho-(1D-myo-inositol 4-phosphate) + ADP + H(+). Its activity is regulated as follows. Inhibited by wortmannin. Increased kinase activity upon interaction with NCS1/FREQ. Functionally, phosphorylates phosphatidylinositol (PI) in the first committed step in the production of the second messenger inositol-1,4,5,-trisphosphate (PIP). May regulate Golgi disintegration/reorganization during mitosis, possibly via its phosphorylation. Involved in Golgi-to-plasma membrane trafficking. May play an important role in the inner ear development. In Rattus norvegicus (Rat), this protein is Phosphatidylinositol 4-kinase beta (Pi4kb).